A 161-amino-acid chain; its full sequence is Kininogen-2 (161 aa).

Residues 1–23 form the signal peptide; sequence MRLWFCLSFFVVLCLEHFPGTLA. Cys150 and Cys156 form a disulfide bridge. Val160 carries the valine amide modification.

It belongs to the bradykinin-related peptide family. Expressed by the skin glands.

It is found in the secreted. Its function is as follows. Inhibits ACE with a Ki of 1.6 uM, and targets B2 bradykinin receptor (BDKRB2). Provokes contraction of smooth muscle preparation (ileum). In vivo, induces an early hyperalgesic effects in living rats after intraplantar injection. In terms of biological role, inhibits the bradykinin-induced in vitro relaxation of rat arterial smooth muscle and constriction of intestinal smooth muscle. May target bradykinin receptors (BDKRB). In Bombina orientalis (Oriental fire-bellied toad), this protein is Kininogen-2.